A 155-amino-acid chain; its full sequence is Large ribosomal subunit protein eL24 (155 aa).

A compositionally biased stretch (basic and acidic residues) spans 98–129; it reads PEVRKAKRDDKAKADKEKKKADKAARKAEKAK. The tract at residues 98 to 155 is disordered; that stretch reads PEVRKAKRDDKAKADKEKKKADKAARKAEKAKLAAAQGSKVSKQQAKGAFQKVAATSR.

The protein belongs to the eukaryotic ribosomal protein eL24 family.

This is Large ribosomal subunit protein eL24 (RPL24) from Candida glabrata (strain ATCC 2001 / BCRC 20586 / JCM 3761 / NBRC 0622 / NRRL Y-65 / CBS 138) (Yeast).